The primary structure comprises 96 residues: MSAVTRCEDGLVLRLYIQPKASRDSIVGLHGDEVKVAITAPPVDGQANSHLIKFLGKQFRVAKSQIVIEKGELGRHKQVKIIHPQQIPPEITALTE.

The protein belongs to the UPF0235 family.

The sequence is that of UPF0235 protein YggU from Salmonella agona (strain SL483).